Consider the following 273-residue polypeptide: MSNPFDLLGNDVEDADVVVLPPKEIVKSNTSSKKADVPPPSADPSKARKNRPRPSGNEGAIRDKTAGRRNNRSKDVTDSATTKKSNTRRATDRHSRTGKTDTKKKVNQGWGDDKKELSAEKEAQADAAAEIAEDAAEAEDAGKPKTAQLSLQDYLNQQANNQFNKVPEAKKVELDAERIETAEKEAYVPATKVKNVKSKQLKTKEYLEFDATFVESNTRKNFGDRNNNSRNNFNNRRGGRGARKGNNTANATNSANTVQKNRNIDVSNLPSLA.

The disordered stretch occupies residues 1–153 (MSNPFDLLGN…PKTAQLSLQD (153 aa)). Serine 2 bears the N-acetylserine mark. Serine 32, serine 41, and serine 45 each carry phosphoserine; by MTOR. Lysine 46 participates in a covalent cross-link: Glycyl lysine isopeptide (Lys-Gly) (interchain with G-Cter in ubiquitin). Phosphoserine; by MTOR is present on residues serine 55 and serine 73. Residue serine 55 is modified to Phosphoserine. 3 stretches are compositionally biased toward basic and acidic residues: residues 60–77 (AIRDKTAGRRNNRSKDVT), 89–104 (RATDRHSRTGKTDTKK), and 111–124 (GDDKKELSAEKEAQ). Phosphoserine is present on serine 118. Glycyl lysine isopeptide (Lys-Gly) (interchain with G-Cter in ubiquitin) cross-links involve residues lysine 121 and lysine 171. Threonine 181 carries the phosphothreonine; by MTOR modification. Residue lysine 184 forms a Glycyl lysine isopeptide (Lys-Gly) (interchain with G-Cter in ubiquitin) linkage. Phosphothreonine; by MTOR is present on threonine 218. Positions 219-273 (RKNFGDRNNNSRNNFNNRRGGRGARKGNNTANATNSANTVQKNRNIDVSNLPSLA) are disordered. Composition is skewed to low complexity over residues 224–236 (DRNNNSRNNFNNR) and 244–257 (KGNNTANATNSANT). Serine 229 is subject to Phosphoserine. The span at 258 to 273 (VQKNRNIDVSNLPSLA) shows a compositional bias: polar residues.

This sequence belongs to the SERBP1-HABP4 family. As to quaternary structure, associates with mature 80S ribosomes. Binds to the head domain of the 40S ribosomal subunit and prevents mRNA binding by inserting its alpha-helix domain towards the mRNA entry tunnel at the decoding site, where it blocks the binding of tRNA and mRNA at the A- and P-sites. Interacts with EFT1; interaction sequesters EFT1 at the A-site of the ribosome, thereby blocking the interaction sites of the mRNA-tRNA complex, promoting ribosome stabilization and hibernation. Interacts with CDC13. Associates with the telomere-proximal Y' element. Phosphorylation by TORC1 upon nutrient replenishment inhibits STM1 and causes its release from dormant ribosomes.

The protein resides in the cytoplasm. It localises to the nucleus. The protein localises to the perinuclear region. In terms of biological role, ribosome preservation factor that protect a small pool of nontranslating, vacant ribosomes in cells under nutrient starvation conditions. Under nutrient-limiting conditions, cells reduce ribosome biogenesis and degrade ribosomes via autophagy (ribophagy) or proteasomal degradation. To avoid excessive degradation during starvation, STM1 binds to and protects 80S ribosomes from proteasomal degradation. Under nutrient-sufficient conditions, TORC1 phosphorylates and inhibits STM1 to prevent formation of dormant 80S ribosomes. Acts as an inhibitor of mRNA translation by promoting ribosome hibernation: clamps the two ribosomal subunits, thereby preventing their dissociation, and inhibits translation by excluding mRNA-binding. Acts via its association with eEF2 (EFT1), promoting ribosome stabilization and storage in an inactive state. May also repress translation by preventing association of eEF3 (YEF3 and HEF3) with ribosomes. Binds specifically G4 quadruplex (these are four-stranded right-handed helices, stabilized by guanine base quartets) and purine motif triplex (characterized by a third, antiparallel purine-rich DNA strand located within the major groove of a homopurine stretch of duplex DNA) nucleic acid structures. These structures may be present at telomeres or in rRNAs. Acts with CDC13 to control telomere length homeostasis. Involved in the control of the apoptosis-like cell death. This is Suppressor protein STM1 from Saccharomyces cerevisiae (strain ATCC 204508 / S288c) (Baker's yeast).